The sequence spans 334 residues: Serpentine receptor class alpha-11 (334 aa).

The Extracellular segment spans residues 1 to 23 (MTTNNPVCASDAHMEMYSSKLYT). A helical transmembrane segment spans residues 24–44 (SALFLNLIIATTSMILTGFAI). Over 45-57 (QKLFMESIINIST) the chain is Cytoplasmic. A helical transmembrane segment spans residues 58 to 80 (RMFLFCGLMCCSLHQTAYIVLRI). Over 81 to 105 (QVIYQVFFKLSEPCNLYYPAIDCKY) the chain is Extracellular. Residues 106–126 (VTFSLVAGNTGMIFIQSAMTI) traverse the membrane as a helical segment. Residues 127-145 (DRIFATIFPKLWPKLKYWP) are Cytoplasmic-facing. Residues 146-166 (GVVLSILMIACNYANVQIIFW) traverse the membrane as a helical segment. The Extracellular segment spans residues 167–191 (GDPLTEYVPTCGQFPSKSVNRFQTF). The chain crosses the membrane as a helical span at residues 192–212 (LAIALYMSIAHMVINVIILYI). Residues 213–239 (NVLQDRQQSKSFNVNQRYQSREALKSS) lie on the Cytoplasmic side of the membrane. A helical membrane pass occupies residues 240-260 (QAIFFLSMSQFFACLIYSVFT). Residues 261–277 (KVFLEFQLNLSPLQSGL) lie on the Extracellular side of the membrane. Residues 278–298 (VLALSYTTPYACIAIPSLIIF) traverse the membrane as a helical segment. The Cytoplasmic segment spans residues 299–334 (TFRFIKNQRLRNINELRSQTETGDECMRKIAKIWEK).

The protein belongs to the nematode receptor-like protein sra family. As to expression, expressed in interneurons AIY and AVB in L1 larvae. In adults, strong expression is seen in AIY and AIA but only weak expression in AVB.

Its subcellular location is the membrane. Its function is as follows. A G protein-coupled receptor required for olfactory imprinting a requisite in ordorant response such as benzaldehyde and isoamylalcohol. The chain is Serpentine receptor class alpha-11 (sra-11) from Caenorhabditis elegans.